Here is a 189-residue protein sequence, read N- to C-terminus: Glycerol-3-phosphate acyltransferase (189 aa).

4 consecutive transmembrane segments (helical) span residues 1-21 (MFWL…AIVL), 77-97 (LQEQ…PVYF), 111-131 (MLMG…LLTF), and 151-171 (LLAW…VMIV).

This sequence belongs to the PlsY family. Probably interacts with PlsX.

The protein resides in the cell inner membrane. It catalyses the reaction an acyl phosphate + sn-glycerol 3-phosphate = a 1-acyl-sn-glycero-3-phosphate + phosphate. The protein operates within lipid metabolism; phospholipid metabolism. In terms of biological role, catalyzes the transfer of an acyl group from acyl-phosphate (acyl-PO(4)) to glycerol-3-phosphate (G3P) to form lysophosphatidic acid (LPA). This enzyme utilizes acyl-phosphate as fatty acyl donor, but not acyl-CoA or acyl-ACP. The protein is Glycerol-3-phosphate acyltransferase of Pseudomonas putida (strain W619).